Reading from the N-terminus, the 307-residue chain is Oxygen-dependent coproporphyrinogen-III oxidase (307 aa).

Residue serine 99 participates in substrate binding. Residues histidine 103 and histidine 113 each coordinate a divalent metal cation. The active-site Proton donor is histidine 113. 115–117 contacts substrate; that stretch reads NVR. A divalent metal cation contacts are provided by histidine 152 and histidine 182. The segment at 247 to 282 is important for dimerization; sequence YVEFNLVFDRGTLFGLQSGGRTESILMSMPPVANWR. 265-267 lines the substrate pocket; it reads GGR.

The protein belongs to the aerobic coproporphyrinogen-III oxidase family. As to quaternary structure, homodimer. The cofactor is a divalent metal cation.

It localises to the cytoplasm. The enzyme catalyses coproporphyrinogen III + O2 + 2 H(+) = protoporphyrinogen IX + 2 CO2 + 2 H2O. It participates in porphyrin-containing compound metabolism; protoporphyrin-IX biosynthesis; protoporphyrinogen-IX from coproporphyrinogen-III (O2 route): step 1/1. Functionally, involved in the heme biosynthesis. Catalyzes the aerobic oxidative decarboxylation of propionate groups of rings A and B of coproporphyrinogen-III to yield the vinyl groups in protoporphyrinogen-IX. This is Oxygen-dependent coproporphyrinogen-III oxidase from Burkholderia lata (strain ATCC 17760 / DSM 23089 / LMG 22485 / NCIMB 9086 / R18194 / 383).